The following is a 382-amino-acid chain: ATP phosphoribosyltransferase regulatory subunit (382 aa).

Belongs to the class-II aminoacyl-tRNA synthetase family. HisZ subfamily. As to quaternary structure, heteromultimer composed of HisG and HisZ subunits.

Its subcellular location is the cytoplasm. It participates in amino-acid biosynthesis; L-histidine biosynthesis; L-histidine from 5-phospho-alpha-D-ribose 1-diphosphate: step 1/9. In terms of biological role, required for the first step of histidine biosynthesis. May allow the feedback regulation of ATP phosphoribosyltransferase activity by histidine. This chain is ATP phosphoribosyltransferase regulatory subunit, found in Burkholderia thailandensis (strain ATCC 700388 / DSM 13276 / CCUG 48851 / CIP 106301 / E264).